The primary structure comprises 64 residues: Cytochrome c oxidase subunit 5C-2 (64 aa).

Residues 15–34 (SVVKELVIGTVLGLAAGGLW) form a helical membrane-spanning segment.

This sequence belongs to the cytochrome c oxidase subunit 5C family.

Its subcellular location is the mitochondrion inner membrane. Its function is as follows. This protein is one of the nuclear-coded polypeptide chains of cytochrome c oxidase, the terminal oxidase in mitochondrial electron transport. The chain is Cytochrome c oxidase subunit 5C-2 (COX5C2) from Helianthus annuus (Common sunflower).